Consider the following 294-residue polypeptide: Very long chain fatty acid elongase 5 (294 aa).

Transmembrane regions (helical) follow at residues 26 to 46, 64 to 84, 112 to 132, 141 to 161, 172 to 192, 207 to 227, and 231 to 251; these read WLLL…LLIV, ILVV…YELV, VLWW…FFIL, FLHI…MNWV, FNSF…IPAI, LVQF…PCGF, and WLYF…NFYI. Residues 261 to 294 are disordered; that stretch reads AKKDPRHNGIKSVNGHSNGASHTNAVKNRKARTD. Over residues 274 to 286 the composition is skewed to polar residues; it reads NGHSNGASHTNAV.

It belongs to the ELO family. ELOVL5 subfamily. In terms of tissue distribution, expression is highest in intestine, followed by brain and heart, and lowest in gill. Also expressed in liver, spleen and muscle.

It is found in the endoplasmic reticulum membrane. It localises to the cell projection. The protein localises to the dendrite. It carries out the reaction a very-long-chain acyl-CoA + malonyl-CoA + H(+) = a very-long-chain 3-oxoacyl-CoA + CO2 + CoA. The enzyme catalyses (6Z,9Z,12Z)-octadecatrienoyl-CoA + malonyl-CoA + H(+) = (8Z,11Z,14Z)-3-oxoeicosatrienoyl-CoA + CO2 + CoA. It catalyses the reaction (9Z,12Z,15Z)-octadecatrienoyl-CoA + malonyl-CoA + H(+) = (11Z,14Z,17Z)-3-oxoeicosatrienoyl-CoA + CO2 + CoA. The catalysed reaction is (9Z)-hexadecenoyl-CoA + malonyl-CoA + H(+) = 3-oxo-(11Z)-octadecenoyl-CoA + CO2 + CoA. It carries out the reaction (9Z)-octadecenoyl-CoA + malonyl-CoA + H(+) = 3-oxo-(11Z)-eicosenoyl-CoA + CO2 + CoA. The enzyme catalyses (11Z)-octadecenoyl-CoA + malonyl-CoA + H(+) = 3-oxo-(13Z)-eicosenoyl-CoA + CO2 + CoA. It catalyses the reaction (9Z,12Z)-octadecadienoyl-CoA + malonyl-CoA + H(+) = (11Z,14Z)-3-oxoicosa-11,14-dienoyl-CoA + CO2 + CoA. The catalysed reaction is (6Z,9Z,12Z,15Z)-octadecatetraenoyl-CoA + malonyl-CoA + H(+) = (8Z,11Z,14Z,17Z)-3-oxoicosatetraenoyl-CoA + CO2 + CoA. It carries out the reaction (5Z,8Z,11Z,14Z)-eicosatetraenoyl-CoA + malonyl-CoA + H(+) = (7Z,10Z,13Z,16Z)-3-oxodocosatetraenoyl-CoA + CO2 + CoA. The enzyme catalyses (5Z,8Z,11Z,14Z,17Z)-eicosapentaenoyl-CoA + malonyl-CoA + H(+) = 3-oxo-(7Z,10Z,13Z,16Z,19Z)-docosapentaenoyl-CoA + CO2 + CoA. Its pathway is lipid metabolism; polyunsaturated fatty acid biosynthesis. In terms of biological role, catalyzes the first and rate-limiting reaction of the four reactions that constitute the long-chain fatty acids elongation cycle. This endoplasmic reticulum-bound enzymatic process allows the addition of 2 carbons to the chain of long- and very long-chain fatty acids (VLCFAs) per cycle. Condensing enzyme that acts specifically toward polyunsaturated acyl-CoA with the higher activity toward C18:3(n-6) acyl-CoA. May participate in the production of monounsaturated and of polyunsaturated VLCFAs of different chain lengths that are involved in multiple biological processes as precursors of membrane lipids and lipid mediators. In conditions where the essential linoleic and alpha linoleic fatty acids are lacking it is also involved in the synthesis of Mead acid from oleic acid. This Tachysurus fulvidraco (Yellow catfish) protein is Very long chain fatty acid elongase 5.